A 362-amino-acid chain; its full sequence is Large ribosomal subunit protein uL4A (362 aa).

S2 is subject to N-acetylserine. Residue R95 is modified to Omega-N-methylarginine. Residues 277 to 362 (PSHIISTSDV…AVFTETLKHD (86 aa)) are C-terminal-extended nuclear localization signal.

It belongs to the universal ribosomal protein uL4 family. As to quaternary structure, component of the large ribosomal subunit (LSU). Mature yeast ribosomes consist of a small (40S) and a large (60S) subunit. The 40S small subunit contains 1 molecule of ribosomal RNA (18S rRNA) and 33 different proteins (encoded by 57 genes). The large 60S subunit contains 3 rRNA molecules (25S, 5.8S and 5S rRNA) and 46 different proteins (encoded by 81 genes). uL4 is associated with the polypeptide exit tunnel. uL4 interacts with its chaperone ACL4 and the nuclear import receptor KAP104. N-terminally acetylated by acetyltransferase NatA.

It localises to the cytoplasm. It is found in the nucleus. Its function is as follows. Component of the ribosome, a large ribonucleoprotein complex responsible for the synthesis of proteins in the cell. The small ribosomal subunit (SSU) binds messenger RNAs (mRNAs) and translates the encoded message by selecting cognate aminoacyl-transfer RNA (tRNA) molecules. The large subunit (LSU) contains the ribosomal catalytic site termed the peptidyl transferase center (PTC), which catalyzes the formation of peptide bonds, thereby polymerizing the amino acids delivered by tRNAs into a polypeptide chain. The nascent polypeptides leave the ribosome through a tunnel in the LSU and interact with protein factors that function in enzymatic processing, targeting, and the membrane insertion of nascent chains at the exit of the ribosomal tunnel. uL4 participates in the regulation of the accumulation of its own mRNA. The polypeptide is Large ribosomal subunit protein uL4A (Saccharomyces cerevisiae (strain ATCC 204508 / S288c) (Baker's yeast)).